The sequence spans 249 residues: MSSVNVDFEQAGELKIGQVGIANLRIRTLDVPRLVREMQDRVTRAPKLFGRAAVILDFGGLAQTPDLATAKALLDGLRSAGVLPVALAYGTSEIDLLSQQLGIPLLAKFRAQYETAAVSPPPPPPPPPARAEPAAPVARPAPGRMQRNAVRSGQQLYAENCDLTVLSTVGAGAEVIADGSIHIYGTLRGRALAGAQGNPDARIFCRDFHAELVAIAGHYKVLDDVPMDLRGKAVQVWLEQDQIKIAALD.

The tract at residues 116–149 (AAVSPPPPPPPPPARAEPAAPVARPAPGRMQRNA) is disordered. A compositionally biased stretch (pro residues) spans 119–130 (SPPPPPPPPPAR). Residues 131-142 (AEPAAPVARPAP) show a composition bias toward low complexity.

This sequence belongs to the MinC family. As to quaternary structure, interacts with MinD and FtsZ.

Functionally, cell division inhibitor that blocks the formation of polar Z ring septums. Rapidly oscillates between the poles of the cell to destabilize FtsZ filaments that have formed before they mature into polar Z rings. Prevents FtsZ polymerization. In Xanthomonas campestris pv. campestris (strain B100), this protein is Probable septum site-determining protein MinC.